Here is a 190-residue protein sequence, read N- to C-terminus: Potassium-transporting ATPase KdpC subunit (190 aa).

The helical transmembrane segment at 10 to 30 threads the bilayer; the sequence is TFLFLLLITGGVYPLLTTALG.

The protein belongs to the KdpC family. The system is composed of three essential subunits: KdpA, KdpB and KdpC.

The protein localises to the cell inner membrane. In terms of biological role, part of the high-affinity ATP-driven potassium transport (or Kdp) system, which catalyzes the hydrolysis of ATP coupled with the electrogenic transport of potassium into the cytoplasm. This subunit acts as a catalytic chaperone that increases the ATP-binding affinity of the ATP-hydrolyzing subunit KdpB by the formation of a transient KdpB/KdpC/ATP ternary complex. The sequence is that of Potassium-transporting ATPase KdpC subunit from Escherichia coli (strain SMS-3-5 / SECEC).